We begin with the raw amino-acid sequence, 506 residues long: Radiation-sensitive protein 28 (506 aa).

5 WD repeats span residues 55–94, 193–233, 285–325, 357–396, and 404–451; these read PLSI…HRND, HHKY…AVQD, RMQS…RLYS, AHLR…LQPE, and LGTQ…LWNK.

The protein localises to the nucleus. In terms of biological role, involved in transcription-coupled repair nucleotide excision repair (NER) of UV-induced DNA lesions. This Saccharomyces cerevisiae (strain ATCC 204508 / S288c) (Baker's yeast) protein is Radiation-sensitive protein 28 (RAD28).